We begin with the raw amino-acid sequence, 345 residues long: MKDLKDLVRPNVWNLKPYSSARDEFHGDASVFLDANENPWNMPYNRYPDPLQWKLKDRLAVLKGVDRSSIFLGNGSDEAIDLVIRAFCEPGLDSVVTISPSYGMYEVAANVNNVECRKVSLDENFDLDAEAVLESADEWTKVIFLCSPNNPSGNSLDRGSIYKILKNYEGIVVIDEAYIDFSAYPSFLKELSGFPNLIVLQTLSKAWGAAGIRLGMAFASPEIIGVLNKIKYPYNVNQLTQEKALELLNDEATMKHQVNEILTERNRLEKILSEPPFSYQVYPSDANFLLVNVAKADAMYNGLVKKGIVVRNRSNVQKCRGCLRITIGTPKENDSLLNAMKNMKL.

Lys-205 carries the N6-(pyridoxal phosphate)lysine modification.

It belongs to the class-II pyridoxal-phosphate-dependent aminotransferase family. Histidinol-phosphate aminotransferase subfamily. Homodimer. The cofactor is pyridoxal 5'-phosphate.

The enzyme catalyses L-histidinol phosphate + 2-oxoglutarate = 3-(imidazol-4-yl)-2-oxopropyl phosphate + L-glutamate. Its pathway is amino-acid biosynthesis; L-histidine biosynthesis; L-histidine from 5-phospho-alpha-D-ribose 1-diphosphate: step 7/9. The polypeptide is Histidinol-phosphate aminotransferase (Parabacteroides distasonis (strain ATCC 8503 / DSM 20701 / CIP 104284 / JCM 5825 / NCTC 11152)).